We begin with the raw amino-acid sequence, 436 residues long: Histidine--tRNA ligase (436 aa).

This sequence belongs to the class-II aminoacyl-tRNA synthetase family. As to quaternary structure, homodimer.

It localises to the cytoplasm. The enzyme catalyses tRNA(His) + L-histidine + ATP = L-histidyl-tRNA(His) + AMP + diphosphate + H(+). This is Histidine--tRNA ligase from Psychrobacter sp. (strain PRwf-1).